A 185-amino-acid polypeptide reads, in one-letter code: MSRLLEESLKTCPIVKRGEYHYFIHPISDGVPLVEPELLRDISTRVIKMIDTEVDKIVTAEAMGIPIVTAVSIATDIPYVIMRKREYLLEGEIPVHQETGYSKGELYLNGINKGDKVVILDDVISTGGTLVAIINALKRAGADIRDVLCIIDRGNGQNIVEEKTGYKVKTLVKIEVVDGKVQILK.

The protein belongs to the purine/pyrimidine phosphoribosyltransferase family. Archaeal HPRT subfamily. Homodimer.

Its subcellular location is the cytoplasm. It carries out the reaction IMP + diphosphate = hypoxanthine + 5-phospho-alpha-D-ribose 1-diphosphate. The enzyme catalyses GMP + diphosphate = guanine + 5-phospho-alpha-D-ribose 1-diphosphate. Its pathway is purine metabolism; IMP biosynthesis via salvage pathway; IMP from hypoxanthine: step 1/1. In terms of biological role, catalyzes a salvage reaction resulting in the formation of IMP that is energically less costly than de novo synthesis. This chain is Hypoxanthine/guanine phosphoribosyltransferase, found in Methanococcus maripaludis (strain C5 / ATCC BAA-1333).